The sequence spans 247 residues: MMNETRTTIDQDEIDRFSRIAAEWWNPKGKFRPLHQLNPTRLAYIREKICLAFNRDPVSLMPFENLKILDIGCGGGLLCEPMARLGAMVVGVDAAQTNIEVAKLHATQSDLSIDYRTTIAEALADKGEKFDIILNMEVVEHVADVNLFIAATAKMLKSQGVMFVSTLNRTWKAWGLAIVGAEYILRWLPKGTHDYKKFLKPQELKNLLSKNALTVIDEIGITYNPVNDSWNRSKDMDVNYLLLAKRP.

Arg41, Gly72, Asp93, and Met136 together coordinate S-adenosyl-L-methionine.

This sequence belongs to the methyltransferase superfamily. UbiG/COQ3 family.

It carries out the reaction a 3-demethylubiquinol + S-adenosyl-L-methionine = a ubiquinol + S-adenosyl-L-homocysteine + H(+). The enzyme catalyses a 3-(all-trans-polyprenyl)benzene-1,2-diol + S-adenosyl-L-methionine = a 2-methoxy-6-(all-trans-polyprenyl)phenol + S-adenosyl-L-homocysteine + H(+). Its pathway is cofactor biosynthesis; ubiquinone biosynthesis. In terms of biological role, O-methyltransferase that catalyzes the 2 O-methylation steps in the ubiquinone biosynthetic pathway. In Bartonella quintana (strain Toulouse) (Rochalimaea quintana), this protein is Ubiquinone biosynthesis O-methyltransferase.